A 670-amino-acid polypeptide reads, in one-letter code: Soluble lamin-associated protein of 75 kDa (670 aa).

Disordered stretches follow at residues 273-301 (PKRP…SSEM) and 314-670 (STSE…AKLT). Ser-350 carries the post-translational modification Phosphoserine. A compositionally biased stretch (polar residues) spans 358 to 375 (SQTSLTASINKLESTARP). The segment covering 378–387 (SSEEFLEEEP) has biased composition (acidic residues). Ser-379 bears the Phosphoserine mark. Residues 414–423 (EKQDGEKESE) show a composition bias toward basic and acidic residues. Acidic residues predominate over residues 442 to 453 (TEEEDSTSEVLD). At Ser-449 the chain carries Phosphoserine. The segment covering 460 to 470 (PFNSSEDSTNL) has biased composition (polar residues). Composition is skewed to basic and acidic residues over residues 479–494 (KPPE…RIPD) and 504–514 (SDEKGHMEEKL). Residue Ser-515 is modified to Phosphoserine. 2 stretches are compositionally biased toward polar residues: residues 558 to 569 (ENLSPNTTSSLE) and 579 to 591 (PQET…QSSL). Ser-615, Ser-618, and Ser-635 each carry phosphoserine. Basic residues predominate over residues 651-670 (NLRRKAKGHKGPAKKKAKLT).

Belongs to the FAM169 family.

The protein localises to the nucleus envelope. It localises to the nucleus inner membrane. In Homo sapiens (Human), this protein is Soluble lamin-associated protein of 75 kDa (FAM169A).